The following is a 148-amino-acid chain: Nucleoside diphosphate kinase 1 (148 aa).

ATP is bound by residues K9, F57, R85, T91, R102, and N112. Catalysis depends on H115, which acts as the Pros-phosphohistidine intermediate.

This sequence belongs to the NDK family. It depends on Mg(2+) as a cofactor.

The enzyme catalyses a 2'-deoxyribonucleoside 5'-diphosphate + ATP = a 2'-deoxyribonucleoside 5'-triphosphate + ADP. It carries out the reaction a ribonucleoside 5'-diphosphate + ATP = a ribonucleoside 5'-triphosphate + ADP. Major role in the synthesis of nucleoside triphosphates other than ATP. The ATP gamma phosphate is transferred to the NDP beta phosphate via a ping-pong mechanism, using a phosphorylated active-site intermediate. This chain is Nucleoside diphosphate kinase 1 (NDKP1), found in Mesembryanthemum crystallinum (Common ice plant).